Consider the following 61-residue polypeptide: UPF0434 protein Pmen_1615 (61 aa).

This sequence belongs to the UPF0434 family.

The chain is UPF0434 protein Pmen_1615 from Ectopseudomonas mendocina (strain ymp) (Pseudomonas mendocina).